Here is a 299-residue protein sequence, read N- to C-terminus: Oxygen-dependent coproporphyrinogen-III oxidase (299 aa).

Position 92 (Ser-92) interacts with substrate. A divalent metal cation is bound by residues His-96 and His-106. The Proton donor role is filled by His-106. 108-110 (NVR) contributes to the substrate binding site. A divalent metal cation contacts are provided by His-145 and His-175. The tract at residues 240 to 275 (YVEFNLVWDRGTLFGLQTGGRTESILMSMPPLVRWE) is important for dimerization. 258 to 260 (GGR) contacts substrate.

Belongs to the aerobic coproporphyrinogen-III oxidase family. In terms of assembly, homodimer. A divalent metal cation serves as cofactor.

Its subcellular location is the cytoplasm. The catalysed reaction is coproporphyrinogen III + O2 + 2 H(+) = protoporphyrinogen IX + 2 CO2 + 2 H2O. It functions in the pathway porphyrin-containing compound metabolism; protoporphyrin-IX biosynthesis; protoporphyrinogen-IX from coproporphyrinogen-III (O2 route): step 1/1. Functionally, involved in the heme biosynthesis. Catalyzes the aerobic oxidative decarboxylation of propionate groups of rings A and B of coproporphyrinogen-III to yield the vinyl groups in protoporphyrinogen-IX. The protein is Oxygen-dependent coproporphyrinogen-III oxidase of Salmonella heidelberg (strain SL476).